The chain runs to 520 residues: Pantetheine hydrolase VNN2 (520 aa).

The first 22 residues, 1-22 (MVTSSFPISVAVFALITLQVGT), serve as a signal peptide directing secretion. A CN hydrolase domain is found at 31-306 (YEHAVILPNK…GKLLLSEVDS (276 aa)). Asn39 carries N-linked (GlcNAc...) asparagine glycosylation. Glu80 serves as the catalytic Proton acceptor. Lys179 (proton donor) is an active-site residue. Cys211 (nucleophile) is an active-site residue. N-linked (GlcNAc...) asparagine glycosylation is found at Asn273, Asn347, Asn357, Asn411, and Asn468. A lipid anchor (GPI-anchor amidated cysteine) is attached at Cys493. The propeptide at 494-520 (GTSNSAITYLLIFILLMIIALQNIVML) is removed in mature form.

The protein belongs to the carbon-nitrogen hydrolase superfamily. BTD/VNN family. In terms of tissue distribution, widely expressed with higher expression in spleen and blood.

Its subcellular location is the cell membrane. The catalysed reaction is (R)-pantetheine + H2O = cysteamine + (R)-pantothenate. In terms of biological role, amidohydrolase that hydrolyzes specifically one of the carboamide linkages in D-pantetheine thus recycling pantothenic acid (vitamin B5) and releasing cysteamine. Involved in the thymus homing of bone marrow cells. May regulate beta-2 integrin-mediated cell adhesion, migration and motility of neutrophil. The chain is Pantetheine hydrolase VNN2 from Homo sapiens (Human).